The sequence spans 1370 residues: DNA-directed RNA polymerase subunit beta (1370 aa).

This sequence belongs to the RNA polymerase beta chain family. As to quaternary structure, the RNAP catalytic core consists of 2 alpha, 1 beta, 1 beta' and 1 omega subunit. When a sigma factor is associated with the core the holoenzyme is formed, which can initiate transcription.

It carries out the reaction RNA(n) + a ribonucleoside 5'-triphosphate = RNA(n+1) + diphosphate. DNA-dependent RNA polymerase catalyzes the transcription of DNA into RNA using the four ribonucleoside triphosphates as substrates. In Bordetella avium (strain 197N), this protein is DNA-directed RNA polymerase subunit beta.